Consider the following 966-residue polypeptide: Alanine--tRNA ligase, cytoplasmic (966 aa).

Residues His-604, His-608, Cys-723, and His-727 each coordinate Zn(2+).

Belongs to the class-II aminoacyl-tRNA synthetase family. Monomer. It depends on Zn(2+) as a cofactor.

Its subcellular location is the cytoplasm. It catalyses the reaction tRNA(Ala) + L-alanine + ATP = L-alanyl-tRNA(Ala) + AMP + diphosphate. Its function is as follows. Catalyzes the attachment of alanine to tRNA(Ala) in a two-step reaction: alanine is first activated by ATP to form Ala-AMP and then transferred to the acceptor end of tRNA(Ala). Also edits incorrectly charged tRNA(Ala) via its editing domain. The sequence is that of Alanine--tRNA ligase, cytoplasmic from Drosophila melanogaster (Fruit fly).